Here is a 247-residue protein sequence, read N- to C-terminus: Bax inhibitor 1 (247 aa).

The residue at position 1 (Met1) is an N-acetylmethionine. 6 consecutive transmembrane segments (helical) span residues 58–78 (VLWN…MIWL), 92–112 (LLFV…KVAI), 118–138 (ILIT…AAAM), 145–165 (YLYL…LQFA), 173–193 (ASIF…YMVV), and 212–232 (HSLT…IIML).

This sequence belongs to the BI1 family. In terms of assembly, interacts (via C-terminus) with calmodulin, CYTB5-B and CYTB5-D. Interacts indirectly with FAH1 via CYTB5-D. As to expression, expressed in root tips, root vasculature, flower tissues, including stamens and sepals, and in the base of siliques. Not detected in mature leaves.

Its subcellular location is the endoplasmic reticulum membrane. Functionally, suppressor of apoptosis. Modulator of endoplasmic reticulum stress-mediated programmed cell death. Involved in methyl jasmonate-induced leaf senescence through regulating cytoplasmic calcium level. The chain is Bax inhibitor 1 (BI-1) from Arabidopsis thaliana (Mouse-ear cress).